A 189-amino-acid polypeptide reads, in one-letter code: Thymidylate kinase (189 aa).

Residue 7–14 (GIDTAGKS) participates in ATP binding.

It belongs to the thymidylate kinase family.

The enzyme catalyses dTMP + ATP = dTDP + ADP. Its function is as follows. Phosphorylation of dTMP to form dTDP in both de novo and salvage pathways of dTTP synthesis. The polypeptide is Thymidylate kinase (Aliarcobacter butzleri (strain RM4018) (Arcobacter butzleri)).